We begin with the raw amino-acid sequence, 523 residues long: Peptide chain release factor 3 (523 aa).

In terms of domain architecture, tr-type G spans 10-277; sequence KKRRTFAIIS…SFVDLAPAPE (268 aa). GTP contacts are provided by residues 19 to 26, 87 to 91, and 141 to 144; these read SHPDAGKT, DTPGH, and NKLD.

This sequence belongs to the TRAFAC class translation factor GTPase superfamily. Classic translation factor GTPase family. PrfC subfamily.

The protein localises to the cytoplasm. Increases the formation of ribosomal termination complexes and stimulates activities of RF-1 and RF-2. It binds guanine nucleotides and has strong preference for UGA stop codons. It may interact directly with the ribosome. The stimulation of RF-1 and RF-2 is significantly reduced by GTP and GDP, but not by GMP. This is Peptide chain release factor 3 from Lactobacillus helveticus (strain DPC 4571).